Reading from the N-terminus, the 181-residue chain is Large ribosomal subunit protein uL30 (181 aa).

It belongs to the universal ribosomal protein uL30 family. In terms of assembly, part of the 50S ribosomal subunit.

This chain is Large ribosomal subunit protein uL30, found in Hyperthermus butylicus (strain DSM 5456 / JCM 9403 / PLM1-5).